We begin with the raw amino-acid sequence, 80 residues long: Delta-actitoxin-Amc2a (80 aa).

Positions Met1–Ala19 are cleaved as a signal peptide. Positions Ala20–Val30 are excised as a propeptide. Intrachain disulfides connect Cys37–Cys73, Cys39–Cys65, and Cys55–Cys74. Hydroxyproline is present on Pro56.

It belongs to the sea anemone type 3 (BDS) potassium channel toxin family.

It localises to the secreted. The protein localises to the nematocyst. In terms of biological role, neurotoxon that induces paralysis when injected into crabs. The chain is Delta-actitoxin-Amc2a from Antheopsis maculata (Sea anemone).